The primary structure comprises 393 residues: MPNRSFSPRTFMGDHGISIDYNNLEKIVAPKPWKPSHSRSTSTNCTKFVEESLFEEAGNEIQTIILHSFNIYDDSVDSNNNNNNNNNNNNNNKNDDYNFQPPIRQSLSSPQQLVSIRPTPTKPKLVSFLNNNSKVNNNNNNNKTIMTCKVNSKNNINSLVNNNNSKIAINIESCSNLRNNEIQIDDNENINTEYITPNNIVNNILKCKLETQTPTSSQPQTISFLDTFESRVSISPSYNNGQGAISGSEKGSEIITTIINNNNNNNNNNSNNNNNNNNSNNNDNNNNINTKVDESNSNDNILLSQTIDTITENHSDGTLDMKIPLFIHSYSPLNCFNGSEPLTPPIRTHNPITMNQAFTESDLFQQGAELGLLSISPPPTLSISKQFKSATLF.

Disordered stretches follow at residues 77–118 (DSNN…SIRP) and 259–296 (INNN…DESN). Residues 79-92 (NNNNNNNNNNNNNN) show a composition bias toward low complexity. Over residues 103-114 (IRQSLSSPQQLV) the composition is skewed to polar residues. Residues 259–289 (INNNNNNNNNNSNNNNNNNNSNNNDNNNNIN) show a composition bias toward low complexity.

This is an uncharacterized protein from Dictyostelium discoideum (Social amoeba).